The primary structure comprises 313 residues: BTB/POZ domain-containing adapter for CUL3-mediated RhoA degradation protein 3 (313 aa).

An N-acetylmethionine modification is found at methionine 1. The residue at position 23 (serine 23) is a Phosphoserine. A BTB domain is found at lysine 32–glutamate 100. The PCNA-binding signature appears at glutamine 239–proline 245.

The protein belongs to the BACURD family. As to quaternary structure, homotetramer; forms a two-fold symmetric tetramer in solution. Interacts with CUL3; interaction is direct and forms a 5:5 heterodecamer. Component of the BCR(BACURD3) E3 ubiquitin ligase complex, at least composed of CUL3, KCTD10/BACURD3 and RBX1. Interacts with DNA polymerase delta subunit 2/POLD2. Interacts with PCNA.

Its subcellular location is the nucleus. The protein operates within protein modification; protein ubiquitination. Its function is as follows. Substrate-specific adapter of a BCR (BTB-CUL3-RBX1) E3 ubiquitin-protein ligase complex. The BCR(BACURD3) E3 ubiquitin ligase complex mediates the ubiquitination of target proteins, leading to their degradation by the proteasome. This is BTB/POZ domain-containing adapter for CUL3-mediated RhoA degradation protein 3 (KCTD10) from Homo sapiens (Human).